A 158-amino-acid polypeptide reads, in one-letter code: Protein OPG060 (158 aa).

Belongs to the orthopoxvirus OPG058 family.

This Homo sapiens (Human) protein is Protein OPG060 (OPG060).